A 114-amino-acid polypeptide reads, in one-letter code: Fumarate reductase subunit D (114 aa).

A run of 3 helical transmembrane segments spans residues 27 to 47 (ICFP…LVPV), 50 to 70 (IVAF…TIFP), and 94 to 114 (WVFY…VIAL).

This sequence belongs to the FrdD family. In terms of assembly, part of an enzyme complex containing four subunits: a flavoprotein (FrdA), an iron-sulfur protein (FrdB), and two hydrophobic anchor proteins (FrdC and FrdD).

The protein resides in the cell inner membrane. Its function is as follows. Anchors the catalytic components of the fumarate reductase complex to the cell membrane, binds quinones. The sequence is that of Fumarate reductase subunit D from Actinobacillus pleuropneumoniae serotype 3 (strain JL03).